Here is a 465-residue protein sequence, read N- to C-terminus: Glutamate--tRNA ligase 1 (465 aa).

The 'HIGH' region motif lies at 8 to 18 (PSPTGLMHLGN). A 'KMSKS' region motif is present at residues 249–253 (PLSKR). Lys252 lines the ATP pocket.

This sequence belongs to the class-I aminoacyl-tRNA synthetase family. Glutamate--tRNA ligase type 1 subfamily. Monomer.

Its subcellular location is the cytoplasm. The catalysed reaction is tRNA(Glu) + L-glutamate + ATP = L-glutamyl-tRNA(Glu) + AMP + diphosphate. Its function is as follows. Catalyzes the attachment of glutamate to tRNA(Glu) in a two-step reaction: glutamate is first activated by ATP to form Glu-AMP and then transferred to the acceptor end of tRNA(Glu). The polypeptide is Glutamate--tRNA ligase 1 (Coxiella burnetii (strain CbuG_Q212) (Coxiella burnetii (strain Q212))).